The chain runs to 155 residues: Transcriptional repressor NrdR (155 aa).

The segment at 3-34 is a zinc-finger region; sequence CPYCGHLEDRVVDSRETQDGQATRRRRACLSC. One can recognise an ATP-cone domain in the interval 49–139; it reads PQVVKKDGRR…VYRAFRDVGE (91 aa).

Belongs to the NrdR family. The cofactor is Zn(2+).

Negatively regulates transcription of bacterial ribonucleotide reductase nrd genes and operons by binding to NrdR-boxes. The sequence is that of Transcriptional repressor NrdR from Anaeromyxobacter sp. (strain K).